Reading from the N-terminus, the 944-residue chain is MVSDRRLLKKFGKIADKIIALEPQMRQLKDEDFILKTQEFKQMLENGKSLDDILIEVYAVAREAARRVLGLNAYKMQLIGGIILNSGDIAEMRTGEGKTLTGIFPAYLNALSGKGVHIVTVNEYLSRRDSEINGKVFDLLGISVGLNGSSLTKTEKREAYNKDITYTTNAELGFDYLRDNMVSDYSLKVQRKLNYCIIDEADSVLIDEARTPLIISGGTSTRINLYKAANNFALTLKEHDDLDIDLESKQVYLNEQGMKKANEFFSLKNLFAIENTEIFHLIMNALKAQFAFKEGVEYTVRDNEILLIDQFTGRIMHGRSYSDGLQQALQAKENVDIEEETVTLATITYQNFYRLYSKIAGMTGTAKTEEEEFIKIYNTRVIQTPTNKPVIRKDEPDLTFGTKNAALKKLVEDVLEAHKKGAPILIGTTSVESSEQIARYLKKANLKFETINAKNHDREAEIVAKAGEIGAITLATNMAGRGTDIKLAKGVAELGGLRVFGVERNEARRIDNQLRGRSGRQGDPGLSRFYISMDDDLMMRFTAPKTRQRFKALGDDYIKSKMFTRAVTNAQKKLEGMNFDQRKNVLDYDNILAQQREIIYAQRDDILEANDLSVVIEKMQITAAYELIEKHSTLVHGEKTINKKELLEVIDGILVPKNKFRIDDFNNKEKMDLAVEIAEAMMQLYKARISDIPDDVIIVMERKIILDAFDKHWTKHLDIAGKLKSGIYLQQYAQNNPLAIYIEQATNLFNKMKINIANEVVENLANVILRVVEDEEQREERIEVTDKDIEEILFETGLQPSDINNKAINQRFDELEEEFKDDKQKLRRLRIQRDVMLGLVLELERRAEMIISPQNDQQAITQLIKELQNDIDIASITIDQIHQNFNNMVEQINDPEKLKHLVIAKDVLLQLVARMDDIKEQEKQTRKKKKKKPHEDESSKTKIG.

ATP contacts are provided by residues Q77, G95–T99, and D484. The interval E920–G944 is disordered. The segment covering P933–G944 has biased composition (basic and acidic residues).

It belongs to the SecA family. In terms of assembly, monomer and homodimer. Part of the essential Sec protein translocation apparatus which comprises SecA, SecYEG and auxiliary proteins SecDF. Other proteins may also be involved.

Its subcellular location is the cell membrane. The protein localises to the cytoplasm. It catalyses the reaction ATP + H2O + cellular proteinSide 1 = ADP + phosphate + cellular proteinSide 2.. In terms of biological role, part of the Sec protein translocase complex. Interacts with the SecYEG preprotein conducting channel. Has a central role in coupling the hydrolysis of ATP to the transfer of proteins into and across the cell membrane, serving as an ATP-driven molecular motor driving the stepwise translocation of polypeptide chains across the membrane. This chain is Protein translocase subunit SecA, found in Mycoplasma mycoides subsp. mycoides SC (strain CCUG 32753 / NCTC 10114 / PG1).